The primary structure comprises 399 residues: MAATAAAVVAEEDTELRDLLVQTLENSGVLNRIKAELRAAVFLALEEQEKVENKTPLVNESLKKFLNTKDGRLVASLVAEFLQFFNLDFTLAVFQPETSTLQGLEGRENLARDLGIIEAEGTVGGPLLLEVIRRCQQKEKGPTTGEGALDLSDVHSPPKSPEGKTSAQTTPSKIPRYKGQGKKKTSGQKAGDKKANDEANQSDTSVSLSEPKSKSSLHLLSHETKIGSFLSNRTLDGKDKAGLCPDEDDMEGDSFFDDPIPKPEKTYGLRKEPRKQAGSLASLSDAPPLKSGLSSLAGAPSLKDSESKRGNTVLKDLKLISDKIGSLGLGTGEDDDYVDDFNSTSHRSEKSEISIGEEIEEDLSVEIDDINTSDKLDDLTQDLTVSQLSDVADYLEDVA.

The LisH domain occupies 70 to 102 (DGRLVASLVAEFLQFFNLDFTLAVFQPETSTLQ). 2 disordered regions span residues 139–218 (EKGP…SSLH) and 232–308 (NRTL…SESK). Thr143 is subject to Phosphothreonine. Phosphoserine occurs at positions 152, 156, and 160. Positions 163 to 172 (GKTSAQTTPS) are enriched in polar residues. Thr170 is subject to Phosphothreonine. Basic residues predominate over residues 175-186 (PRYKGQGKKKTS). Ser202 carries the phosphoserine modification. The segment covering 205-218 (SVSLSEPKSKSSLH) has biased composition (low complexity). A Phosphothreonine modification is found at Thr234. The span at 245-256 (PDEDDMEGDSFF) shows a compositional bias: acidic residues. Basic and acidic residues predominate over residues 259–275 (PIPKPEKTYGLRKEPRK). Low complexity predominate over residues 286 to 302 (APPLKSGLSSLAGAPSL). Phosphoserine is present on residues Ser301 and Ser326. Residues 331 to 353 (TGEDDDYVDDFNSTSHRSEKSEI) form a disordered region. The residue at position 337 (Tyr337) is a Phosphotyrosine.

The protein belongs to the CEP43 family. As to quaternary structure, homodimer. Part of a ternary complex that contains CEP350, CEP43 and MAPRE1. Interacts directly with CEP350 and MAPRE1. Interacts with CEP19. Interacts (via N-terminus) with CEP350 (via C-terminus). In terms of tissue distribution, ubiquitous. Highly expressed in heart, liver, muscle, kidney, intestine, colon, adrenal gland, prostate, testis, and pancreas.

It localises to the cytoplasm. The protein resides in the cytoskeleton. It is found in the microtubule organizing center. The protein localises to the centrosome. Its subcellular location is the centriole. It localises to the cilium basal body. In terms of biological role, required for anchoring microtubules to the centrosomes. Required for ciliation. The sequence is that of Centrosomal protein 43 from Homo sapiens (Human).